The chain runs to 488 residues: Alpha-ketoglutaric semialdehyde dehydrogenase (488 aa).

NAD(+)-binding positions include K180 and 233–238; that span reads GSNQVG. The active-site Proton acceptor is E255. The active-site Nucleophile is the C289. NAD(+) contacts are provided by Q336 and E390.

It belongs to the aldehyde dehydrogenase family. Homotetramer.

The enzyme catalyses 2,5-dioxopentanoate + NADP(+) + H2O = 2-oxoglutarate + NADPH + 2 H(+). It carries out the reaction 2,5-dioxopentanoate + NAD(+) + H2O = 2-oxoglutarate + NADH + 2 H(+). Catalyzes the NAD(P)(+)-dependent oxidation of alpha-ketoglutaric semialdehyde (alphaKGSA) to alpha-ketoglutarate. Prefers NADP(+) to NAD(+) as a cosubstrate. In vitro, can also use various aldehydes. This Bacillus subtilis (strain 168) protein is Alpha-ketoglutaric semialdehyde dehydrogenase.